A 180-amino-acid chain; its full sequence is Pro-glucagon (180 aa).

The first 20 residues, 1–20 (MKSLYFVAGLFVMLVQGSWQ), serve as a signal peptide directing secretion. Residues 25-35 (NTEEKSSSFPA) show a composition bias toward polar residues. Positions 25–59 (NTEEKSSSFPAPQTDPLGDPDQINEDKRHSQGTFT) are disordered. Serine 54 bears the Phosphoserine mark. Positions 84–89 (NKNNIA) are excised as a propeptide. A phosphoserine mark is found at serine 105 and serine 108. At arginine 127 the chain carries Arginine amide. The propeptide occupies 131–145 (DFPEEVNIVEELRRR). 2 positions are modified to phosphoserine: serine 150 and serine 152.

The protein belongs to the glucagon family. Proglucagon is post-translationally processed in a tissue-specific manner in pancreatic A cells and intestinal L cells. In pancreatic A cells, the major bioactive hormone is glucagon cleaved by PCSK2/PC2. In the intestinal L cells PCSK1/PC1 liberates GLP-1, GLP-2, glicentin and oxyntomodulin. GLP-1 is further N-terminally truncated by post-translational processing in the intestinal L cells resulting in GLP-1(7-37) GLP-1-(7-36)amide. The C-terminal amidation is neither important for the metabolism of GLP-1 nor for its effects on the endocrine pancreas. In terms of tissue distribution, glucagon is secreted in the A cells of the islets of Langerhans. GLP-1, GLP-2, oxyntomodulin and glicentin are secreted from enteroendocrine cells throughout the gastrointestinal tract.

It localises to the secreted. Its function is as follows. Plays a key role in glucose metabolism and homeostasis. Regulates blood glucose by increasing gluconeogenesis and decreasing glycolysis. A counterregulatory hormone of insulin, raises plasma glucose levels in response to insulin-induced hypoglycemia. Plays an important role in initiating and maintaining hyperglycemic conditions in diabetes. Functionally, potent stimulator of glucose-dependent insulin release. Also stimulates insulin release in response to IL6. Plays important roles on gastric motility and the suppression of plasma glucagon levels. May be involved in the suppression of satiety and stimulation of glucose disposal in peripheral tissues, independent of the actions of insulin. Has growth-promoting activities on intestinal epithelium. May also regulate the hypothalamic pituitary axis (HPA) via effects on LH, TSH, CRH, oxytocin, and vasopressin secretion. Increases islet mass through stimulation of islet neogenesis and pancreatic beta cell proliferation. Inhibits beta cell apoptosis. Stimulates intestinal growth and up-regulates villus height in the small intestine, concomitant with increased crypt cell proliferation and decreased enterocyte apoptosis. The gastrointestinal tract, from the stomach to the colon is the principal target for GLP-2 action. Plays a key role in nutrient homeostasis, enhancing nutrient assimilation through enhanced gastrointestinal function, as well as increasing nutrient disposal. Stimulates intestinal glucose transport and decreases mucosal permeability. In terms of biological role, significantly reduces food intake. Inhibits gastric emptying in humans. Suppression of gastric emptying may lead to increased gastric distension, which may contribute to satiety by causing a sensation of fullness. Its function is as follows. May modulate gastric acid secretion and the gastro-pyloro-duodenal activity. May play an important role in intestinal mucosal growth in the early period of life. The polypeptide is Pro-glucagon (GCG) (Bos taurus (Bovine)).